A 250-amino-acid chain; its full sequence is Ribosomal RNA small subunit methyltransferase J (250 aa).

Residues 101–102 (RD), 117–118 (ER), 153–154 (SS), and aspartate 171 contribute to the S-adenosyl-L-methionine site.

Belongs to the methyltransferase superfamily. RsmJ family.

The protein resides in the cytoplasm. It catalyses the reaction guanosine(1516) in 16S rRNA + S-adenosyl-L-methionine = N(2)-methylguanosine(1516) in 16S rRNA + S-adenosyl-L-homocysteine + H(+). Its function is as follows. Specifically methylates the guanosine in position 1516 of 16S rRNA. This Shigella dysenteriae serotype 1 (strain Sd197) protein is Ribosomal RNA small subunit methyltransferase J.